A 310-amino-acid chain; its full sequence is ADP-L-glycero-D-manno-heptose-6-epimerase (310 aa).

NADP(+) contacts are provided by residues 10-11, 31-32, K38, K53, 75-79, and N92; these read FI, DN, and EGACS. Y140 (proton acceptor) is an active-site residue. K144 provides a ligand contact to NADP(+). N169 is a substrate binding site. The NADP(+) site is built by V170 and K178. The active-site Proton acceptor is K178. Substrate is bound by residues S180, H187, 201-204, R209, and Y272; that span reads FEGS.

Belongs to the NAD(P)-dependent epimerase/dehydratase family. HldD subfamily. In terms of assembly, homopentamer. Requires NADP(+) as cofactor.

The enzyme catalyses ADP-D-glycero-beta-D-manno-heptose = ADP-L-glycero-beta-D-manno-heptose. The protein operates within nucleotide-sugar biosynthesis; ADP-L-glycero-beta-D-manno-heptose biosynthesis; ADP-L-glycero-beta-D-manno-heptose from D-glycero-beta-D-manno-heptose 7-phosphate: step 4/4. Catalyzes the interconversion between ADP-D-glycero-beta-D-manno-heptose and ADP-L-glycero-beta-D-manno-heptose via an epimerization at carbon 6 of the heptose. This is ADP-L-glycero-D-manno-heptose-6-epimerase from Klebsiella pneumoniae subsp. pneumoniae (strain ATCC 700721 / MGH 78578).